A 537-amino-acid polypeptide reads, in one-letter code: Chaperonin GroEL (537 aa).

ATP is bound by residues 29 to 32, 86 to 90, glycine 413, and aspartate 492; these read TLGP and DGTTT.

Belongs to the chaperonin (HSP60) family. As to quaternary structure, forms a cylinder of 14 subunits composed of two heptameric rings stacked back-to-back. Interacts with the co-chaperonin GroES.

The protein resides in the cytoplasm. The enzyme catalyses ATP + H2O + a folded polypeptide = ADP + phosphate + an unfolded polypeptide.. Together with its co-chaperonin GroES, plays an essential role in assisting protein folding. The GroEL-GroES system forms a nano-cage that allows encapsulation of the non-native substrate proteins and provides a physical environment optimized to promote and accelerate protein folding. The protein is Chaperonin GroEL of Dehalococcoides mccartyi (strain ATCC BAA-2266 / KCTC 15142 / 195) (Dehalococcoides ethenogenes (strain 195)).